The chain runs to 625 residues: DNA mismatch repair protein MutL (625 aa).

This sequence belongs to the DNA mismatch repair MutL/HexB family.

In terms of biological role, this protein is involved in the repair of mismatches in DNA. It is required for dam-dependent methyl-directed DNA mismatch repair. May act as a 'molecular matchmaker', a protein that promotes the formation of a stable complex between two or more DNA-binding proteins in an ATP-dependent manner without itself being part of a final effector complex. The protein is DNA mismatch repair protein MutL of Azorhizobium caulinodans (strain ATCC 43989 / DSM 5975 / JCM 20966 / LMG 6465 / NBRC 14845 / NCIMB 13405 / ORS 571).